Here is a 303-residue protein sequence, read N- to C-terminus: Zinc transporter ZIP9-B (303 aa).

Residues 7-27 form a helical membrane-spanning segment; it reads ISLLSLAMLVGCYVSGIIPLA. N-linked (GlcNAc...) asparagine glycosylation is present at N29. 5 consecutive transmembrane segments (helical) span residues 35–55, 102–122, 142–162, 172–192, and 206–226; these read LKLV…AVIV, AYIG…DQIG, ITTT…LGAA, LIVF…LVSF, and HLLV…LGLS. N-linked (GlcNAc...) asparagine glycosylation is present at N237. Transmembrane regions (helical) follow at residues 240–260 and 282–302; these read GVAM…HVLP and LEVC…IGHQ.

It belongs to the ZIP transporter (TC 2.A.5) family.

It is found in the golgi apparatus. It localises to the trans-Golgi network membrane. The protein localises to the cell membrane. The protein resides in the cytoplasm. Its subcellular location is the perinuclear region. It is found in the mitochondrion. It localises to the nucleus. It carries out the reaction Zn(2+)(in) = Zn(2+)(out). In terms of biological role, transports zinc ions across cell and organelle membranes into the cytoplasm and regulates intracellular zinc homeostasis. Participates in the zinc ions efflux out of the secretory compartments. Regulates intracellular zinc level, resulting in the enhancement of AKT1 and MAPK3/MAPK1 (Erk1/2) phosphorylation in response to the BCR activation. Also functions as a membrane androgen receptor that mediates, through a G protein, the non-classical androgen signaling pathway, characterized by the activation of MAPK3/MAPK1 (Erk1/2) and transcription factors CREB1 or ATF1. Moreover, has dual functions as a membrane-bound androgen receptor and as an androgen-dependent zinc transporter both of which are mediated through an inhibitory G protein (Gi) that mediates both MAP kinase and zinc signaling leading to the androgen-dependent apoptotic process. This Xenopus laevis (African clawed frog) protein is Zinc transporter ZIP9-B (slc39a9-b).